A 482-amino-acid chain; its full sequence is Aspartyl/glutamyl-tRNA(Asn/Gln) amidotransferase subunit B (482 aa).

Belongs to the GatB/GatE family. GatB subfamily. As to quaternary structure, heterotrimer of A, B and C subunits.

It catalyses the reaction L-glutamyl-tRNA(Gln) + L-glutamine + ATP + H2O = L-glutaminyl-tRNA(Gln) + L-glutamate + ADP + phosphate + H(+). The catalysed reaction is L-aspartyl-tRNA(Asn) + L-glutamine + ATP + H2O = L-asparaginyl-tRNA(Asn) + L-glutamate + ADP + phosphate + 2 H(+). In terms of biological role, allows the formation of correctly charged Asn-tRNA(Asn) or Gln-tRNA(Gln) through the transamidation of misacylated Asp-tRNA(Asn) or Glu-tRNA(Gln) in organisms which lack either or both of asparaginyl-tRNA or glutaminyl-tRNA synthetases. The reaction takes place in the presence of glutamine and ATP through an activated phospho-Asp-tRNA(Asn) or phospho-Glu-tRNA(Gln). This is Aspartyl/glutamyl-tRNA(Asn/Gln) amidotransferase subunit B from Thermotoga sp. (strain RQ2).